A 73-amino-acid chain; its full sequence is Mu-conotoxin PIIIA (73 aa).

Positions 1 to 19 (MSKLGVLLTICLLLFPITA) are cleaved as a signal peptide. A propeptide spanning residues 20 to 49 (LPMDGDQPADRLAERMQDNISSEEHPFEKR) is cleaved from the precursor. The residue at position 50 (Q50) is a Pyrrolidone carboxylic acid. 6 cysteine pairs are disulfide-bonded: C53-C65, C53-C70, C54-C70, C54-C71, C60-C65, and C60-C71. 4-hydroxyproline is present on P57. P67 carries the 4-hydroxyproline modification. C71 carries the post-translational modification Cysteine amide.

It belongs to the conotoxin M superfamily. 3D-structure of 3 disulfide-bond connectivities isomers is described (PIIIA-1 (C1-C5, C2-C6, C3-C4), PIIIA-2 (C1-C4, C2-C5, C3-C6) and PIIIA-3 (C1-C2, C3-C4, C5-C6)). Only PIIIA-2 contains the cysteine connectivity described as typical for native mu-conotoxins. However, PIIIA-1 is more potent than PIIIA-2, suggesting another possible disulfid connectivity. For this reason, both connectivities have been indicated in features. In terms of tissue distribution, expressed by the venom duct.

The protein localises to the secreted. In terms of biological role, mu-conotoxins block voltage-gated sodium channels (Nav). This toxin potently blocks rNav1.4/SCN4A (IC(50)=36-41 nM). It also moderately blocks rNav1.1/SCN1A (IC(50)=120 nM), rNav1.2/SCN2A (IC(50)=620 nM), rNav1.3/SCN3A (IC(50)=3.2 uM), mNav1.6/SCN8A (IC(50)=100 nM). This inhibition is reversible. The block of Nav1.1, Nav1.2, and Nav1.6 is modified when beta-subunits are coexpressed with alpha subunits. Hence, blocks of channels containing the beta-1 and beta-3 subunits are more potent (compared to channels without beta subunits), whereas blocks of channels containing the beta-2 and beta-4 are less potent (compared to channels without beta subunits). In vivo, this peptide causes flaccid paralysis in both mice and fish. This Conus purpurascens (Purple cone) protein is Mu-conotoxin PIIIA.